Here is a 204-residue protein sequence, read N- to C-terminus: Large ribosomal subunit protein eL15y (204 aa).

This sequence belongs to the eukaryotic ribosomal protein eL15 family.

The chain is Large ribosomal subunit protein eL15y (SB62) from Picea mariana (Black spruce).